The following is a 120-amino-acid chain: Aspartate 1-decarboxylase (120 aa).

S25 serves as the catalytic Schiff-base intermediate with substrate; via pyruvic acid. S25 carries the pyruvic acid (Ser) modification. T57 is a binding site for substrate. Y58 serves as the catalytic Proton donor. Substrate is bound at residue G73–A75.

This sequence belongs to the PanD family. Heterooctamer of four alpha and four beta subunits. The cofactor is pyruvate. In terms of processing, is synthesized initially as an inactive proenzyme, which is activated by self-cleavage at a specific serine bond to produce a beta-subunit with a hydroxyl group at its C-terminus and an alpha-subunit with a pyruvoyl group at its N-terminus.

It is found in the cytoplasm. It catalyses the reaction L-aspartate + H(+) = beta-alanine + CO2. It functions in the pathway cofactor biosynthesis; (R)-pantothenate biosynthesis; beta-alanine from L-aspartate: step 1/1. Catalyzes the pyruvoyl-dependent decarboxylation of aspartate to produce beta-alanine. This is Aspartate 1-decarboxylase from Polynucleobacter asymbioticus (strain DSM 18221 / CIP 109841 / QLW-P1DMWA-1) (Polynucleobacter necessarius subsp. asymbioticus).